Here is a 386-residue protein sequence, read N- to C-terminus: Succinate--CoA ligase [ADP-forming] subunit beta (386 aa).

In terms of domain architecture, ATP-grasp spans K9 to E244. Residues K46, G53–G55, E99, C102, and E107 contribute to the ATP site. Mg(2+) contacts are provided by N199 and D213. Residues N264 and G320–M322 contribute to the substrate site.

This sequence belongs to the succinate/malate CoA ligase beta subunit family. Heterotetramer of two alpha and two beta subunits. Requires Mg(2+) as cofactor.

The catalysed reaction is succinate + ATP + CoA = succinyl-CoA + ADP + phosphate. The enzyme catalyses GTP + succinate + CoA = succinyl-CoA + GDP + phosphate. It functions in the pathway carbohydrate metabolism; tricarboxylic acid cycle; succinate from succinyl-CoA (ligase route): step 1/1. Functionally, succinyl-CoA synthetase functions in the citric acid cycle (TCA), coupling the hydrolysis of succinyl-CoA to the synthesis of either ATP or GTP and thus represents the only step of substrate-level phosphorylation in the TCA. The beta subunit provides nucleotide specificity of the enzyme and binds the substrate succinate, while the binding sites for coenzyme A and phosphate are found in the alpha subunit. This chain is Succinate--CoA ligase [ADP-forming] subunit beta, found in Ehrlichia ruminantium (strain Welgevonden).